Consider the following 364-residue polypeptide: DNA polymerase IV (364 aa).

Residues 14–198 form the UmuC domain; that stretch reads IIHIDMDAFF…LPIEKFHGVG (185 aa). The Mg(2+) site is built by Asp-18 and Asp-116. Glu-117 is an active-site residue.

It belongs to the DNA polymerase type-Y family. In terms of assembly, monomer. Requires Mg(2+) as cofactor.

It localises to the cytoplasm. The catalysed reaction is DNA(n) + a 2'-deoxyribonucleoside 5'-triphosphate = DNA(n+1) + diphosphate. Functionally, poorly processive, error-prone DNA polymerase involved in untargeted mutagenesis. Copies undamaged DNA at stalled replication forks, which arise in vivo from mismatched or misaligned primer ends. These misaligned primers can be extended by PolIV. Exhibits no 3'-5' exonuclease (proofreading) activity. May be involved in translesional synthesis, in conjunction with the beta clamp from PolIII. In Streptococcus pyogenes serotype M4 (strain MGAS10750), this protein is DNA polymerase IV.